Here is a 588-residue protein sequence, read N- to C-terminus: BTB/POZ domain-containing protein At3g26490 (588 aa).

The BTB domain maps to 28-99 (NDLVIQVKST…CYGITITLCA (72 aa)). The NPH3 domain maps to 218 to 507 (RWWGEDLAEL…VQILFVEQAR (290 aa)). Residues S376 and S378 each carry the phosphoserine modification. Y448 is subject to Phosphotyrosine. The interval 529–554 (FTTRREEGGQEEEERDETKPSGGFLQ) is disordered.

It belongs to the NPH3 family.

It functions in the pathway protein modification; protein ubiquitination. Functionally, may act as a substrate-specific adapter of an E3 ubiquitin-protein ligase complex (CUL3-RBX1-BTB) which mediates the ubiquitination and subsequent proteasomal degradation of target proteins. The chain is BTB/POZ domain-containing protein At3g26490 from Arabidopsis thaliana (Mouse-ear cress).